A 389-amino-acid polypeptide reads, in one-letter code: Chalcone synthase 2 (389 aa).

Residue Cys-164 is part of the active site.

Belongs to the thiolase-like superfamily. Chalcone/stilbene synthases family.

The enzyme catalyses (E)-4-coumaroyl-CoA + 3 malonyl-CoA + 3 H(+) = 2',4,4',6'-tetrahydroxychalcone + 3 CO2 + 4 CoA. It participates in secondary metabolite biosynthesis; flavonoid biosynthesis. Its function is as follows. The primary product of this enzyme is 4,2',4',6'-tetrahydroxychalcone (also termed naringenin-chalcone or chalcone) which can under specific conditions spontaneously isomerize into naringenin. This Pisum sativum (Garden pea) protein is Chalcone synthase 2 (CHS2).